A 103-amino-acid chain; its full sequence is Large ribosomal subunit protein bL21 (103 aa).

It belongs to the bacterial ribosomal protein bL21 family. In terms of assembly, part of the 50S ribosomal subunit. Contacts protein L20.

Functionally, this protein binds to 23S rRNA in the presence of protein L20. The protein is Large ribosomal subunit protein bL21 of Legionella pneumophila (strain Paris).